We begin with the raw amino-acid sequence, 134 residues long: Small ribosomal subunit protein uS11 (134 aa).

Residues 1 to 24 (MATKMAGVKRAGRKRKERKNIERG) are disordered.

This sequence belongs to the universal ribosomal protein uS11 family. As to quaternary structure, part of the 30S ribosomal subunit. Interacts with proteins S7 and S18. Binds to IF-3.

Functionally, located on the platform of the 30S subunit, it bridges several disparate RNA helices of the 16S rRNA. Forms part of the Shine-Dalgarno cleft in the 70S ribosome. This chain is Small ribosomal subunit protein uS11, found in Acetivibrio thermocellus (strain ATCC 27405 / DSM 1237 / JCM 9322 / NBRC 103400 / NCIMB 10682 / NRRL B-4536 / VPI 7372) (Clostridium thermocellum).